A 314-amino-acid chain; its full sequence is MNKKLKVAIIGPGNIGTDLMIKIMRHGEHLEMGAMVGIDPQSDGLARAQRMGVATTHEGVEGLTRLPVFADIDIVFDATSAGAHVRNDAFLRSLKPNIRMVDLTPAAIGPYCIPVVNGAAHDEALNVNMVTCGGQATIPMVAAVSRVAKVHYGEIIASISSKSAGPGTRANIDEFTETTSKAIEAVGGAAKGKAIIILNPAEPPLIMRDTVYCLSELVDEDEIAASVAQMAADVQKYVPGYRLKQKVQFDIIPASRPINIPGVGQRMSGLKTSVFLEVEGAAHYLPAYAGNLDIMTSAAKTTAERMAARILSAA.

C132 serves as the catalytic Acyl-thioester intermediate. Residues 163–171 and N291 each bind NAD(+); that span reads SAGPGTRAN.

Belongs to the acetaldehyde dehydrogenase family.

It catalyses the reaction acetaldehyde + NAD(+) + CoA = acetyl-CoA + NADH + H(+). This is Acetaldehyde dehydrogenase 3 from Dechloromonas aromatica (strain RCB).